The following is a 149-amino-acid chain: MNIINITNKSNFRFMYKKEFLKIMDIIQEKFNFKKRISVDLLITDNKEVRENNLLYRNVDKETDVLSFPFGDPDFFDHLDFIPLGSIIISHEKIVAQALEFNHSKKREFCYLFTHSLLHLLGYDHKEEDEEKIMNQYTKEIVEKLNIYR.

His115, His119, and His125 together coordinate Zn(2+).

The protein belongs to the endoribonuclease YbeY family. Zn(2+) is required as a cofactor.

It is found in the cytoplasm. In terms of biological role, single strand-specific metallo-endoribonuclease involved in late-stage 70S ribosome quality control and in maturation of the 3' terminus of the 16S rRNA. This chain is Endoribonuclease YbeY, found in Mycoplasmopsis pulmonis (strain UAB CTIP) (Mycoplasma pulmonis).